We begin with the raw amino-acid sequence, 386 residues long: Phosphate acyltransferase (386 aa).

Residues 359-386 (PHRARQDELGENKVVGADQSMTAKATGT) are disordered. The segment covering 377 to 386 (QSMTAKATGT) has biased composition (polar residues).

The protein belongs to the PlsX family. As to quaternary structure, homodimer. Probably interacts with PlsY.

The protein localises to the cytoplasm. It carries out the reaction a fatty acyl-[ACP] + phosphate = an acyl phosphate + holo-[ACP]. It functions in the pathway lipid metabolism; phospholipid metabolism. In terms of biological role, catalyzes the reversible formation of acyl-phosphate (acyl-PO(4)) from acyl-[acyl-carrier-protein] (acyl-ACP). This enzyme utilizes acyl-ACP as fatty acyl donor, but not acyl-CoA. The protein is Phosphate acyltransferase of Beijerinckia indica subsp. indica (strain ATCC 9039 / DSM 1715 / NCIMB 8712).